Consider the following 135-residue polypeptide: Peptidyl-prolyl cis-trans isomerase FPR2 (135 aa).

The signal sequence occupies residues 1–17; it reads MMFNIYLFVTFFSTILA. In terms of domain architecture, PPIase FKBP-type spans 43 to 132; it reads GDKVKVHYTG…VFDVELVDVK (90 aa).

This sequence belongs to the FKBP-type PPIase family. FKBP2 subfamily.

The protein localises to the endoplasmic reticulum membrane. It catalyses the reaction [protein]-peptidylproline (omega=180) = [protein]-peptidylproline (omega=0). Inhibited by both FK506 and rapamycin. Binds FK506 with 15-fold lower affinity than FKB1. In terms of biological role, PPIases accelerate the folding of proteins. It catalyzes the cis-trans isomerization of proline imidic peptide bonds in oligopeptides. FKBP-13 may play a role in protein trafficking in the ER. The protein is Peptidyl-prolyl cis-trans isomerase FPR2 (FPR2) of Saccharomyces cerevisiae (strain ATCC 204508 / S288c) (Baker's yeast).